A 1014-amino-acid polypeptide reads, in one-letter code: C2 domain-containing protein 5 (1014 aa).

In terms of domain architecture, C2 spans 1 to 109; that stretch reads MPGKLKVKIV…EAATVISGWF (109 aa). Residues D19, D26, D76, D78, S81, and D84 each coordinate Ca(2+). 4 disordered regions span residues 274–328, 639–669, 801–878, and 992–1014; these read LNPN…GRDG, ETVGSPIPEPRQRTRLLRSQSESSDEAAELD, ALQV…HRGG, and EAGPGQPTAPGPQSAGVGGDSAT. Polar residues predominate over residues 275–292; that stretch reads NPNTHSSGPSTPLKNQTY. The span at 293 to 318 shows a compositional bias: low complexity; that stretch reads SFSPSKSFSRQSSSSDTDLSLTPKTG. The segment covering 319-328 has biased composition (gly residues); the sequence is MGSGSAGRDG. The span at 830 to 840 shows a compositional bias: polar residues; the sequence is SSDSPGPSTFS. Positions 993–1006 are enriched in low complexity; it reads AGPGQPTAPGPQSA.

Requires Ca(2+) as cofactor.

It localises to the cytoplasmic vesicle membrane. The protein resides in the cytoplasm. It is found in the cell cortex. The protein localises to the cell membrane. Its subcellular location is the cell projection. It localises to the ruffle. Its function is as follows. May be required for insulin-stimulated glucose transport and glucose transporter SLC2A4/GLUT4 translocation from intracellular glucose storage vesicle (GSV) to the plasma membrane (PM) in adipocytes. May bind phospholipid membranes in a calcium-dependent manner. The polypeptide is C2 domain-containing protein 5 (c2cd5) (Xenopus tropicalis (Western clawed frog)).